The chain runs to 341 residues: Calcium-binding protein 39 (341 aa).

This sequence belongs to the Mo25 family. Component of a trimeric complex composed of STK11/LKB1, STRAD (STRADA or STRADB) and CAB39/MO25 (CAB39/MO25alpha or CAB39L/MO25beta): the complex tethers STK11/LKB1 in the cytoplasm and stimulates its catalytic activity.

The protein resides in the cytoplasm. Functionally, component of a complex that binds and activates STK11/LKB1. In the complex, required to stabilize the interaction between CAB39/MO25 (CAB39/MO25alpha or CAB39L/MO25beta) and STK11/LKB1. The chain is Calcium-binding protein 39 (CAB39) from Bos taurus (Bovine).